The chain runs to 205 residues: Small ribosomal subunit protein uS4 (205 aa).

In terms of domain architecture, S4 RNA-binding spans 94–157 (SRLDTVVYRM…QQIPLIQESI (64 aa)).

This sequence belongs to the universal ribosomal protein uS4 family. In terms of assembly, part of the 30S ribosomal subunit. Contacts protein S5. The interaction surface between S4 and S5 is involved in control of translational fidelity.

In terms of biological role, one of the primary rRNA binding proteins, it binds directly to 16S rRNA where it nucleates assembly of the body of the 30S subunit. With S5 and S12 plays an important role in translational accuracy. This Rickettsia typhi (strain ATCC VR-144 / Wilmington) protein is Small ribosomal subunit protein uS4.